A 640-amino-acid polypeptide reads, in one-letter code: 1-deoxy-D-xylulose-5-phosphate synthase (640 aa).

Residues His72 and 113–115 (GHA) each bind thiamine diphosphate. Position 144 (Asp144) interacts with Mg(2+). Residues 145–146 (GA), Asn174, Tyr287, and Glu370 contribute to the thiamine diphosphate site. Asn174 is a Mg(2+) binding site.

Belongs to the transketolase family. DXPS subfamily. Homodimer. Requires Mg(2+) as cofactor. Thiamine diphosphate is required as a cofactor.

The catalysed reaction is D-glyceraldehyde 3-phosphate + pyruvate + H(+) = 1-deoxy-D-xylulose 5-phosphate + CO2. It participates in metabolic intermediate biosynthesis; 1-deoxy-D-xylulose 5-phosphate biosynthesis; 1-deoxy-D-xylulose 5-phosphate from D-glyceraldehyde 3-phosphate and pyruvate: step 1/1. In terms of biological role, catalyzes the acyloin condensation reaction between C atoms 2 and 3 of pyruvate and glyceraldehyde 3-phosphate to yield 1-deoxy-D-xylulose-5-phosphate (DXP). This chain is 1-deoxy-D-xylulose-5-phosphate synthase, found in Synechococcus sp. (strain RCC307).